A 233-amino-acid polypeptide reads, in one-letter code: Glucosamine-6-phosphate deaminase (233 aa).

The active-site Proton acceptor; for enolization step is the Asp62. The active-site For ring-opening step is the Asn128. His130 (proton acceptor; for ring-opening step) is an active-site residue. Glu135 serves as the catalytic For ring-opening step.

The protein belongs to the glucosamine/galactosamine-6-phosphate isomerase family. NagB subfamily.

The catalysed reaction is alpha-D-glucosamine 6-phosphate + H2O = beta-D-fructose 6-phosphate + NH4(+). The protein operates within amino-sugar metabolism; N-acetylneuraminate degradation; D-fructose 6-phosphate from N-acetylneuraminate: step 5/5. Functionally, catalyzes the reversible isomerization-deamination of glucosamine 6-phosphate (GlcN6P) to form fructose 6-phosphate (Fru6P) and ammonium ion. The chain is Glucosamine-6-phosphate deaminase from Streptococcus pneumoniae serotype 4 (strain ATCC BAA-334 / TIGR4).